A 740-amino-acid polypeptide reads, in one-letter code: DNA-directed RNA polymerase subunit beta' (740 aa).

Zn(2+) contacts are provided by C65, C67, C103, and C106. Mg(2+) contacts are provided by D539, D541, and D543.

The protein belongs to the RNA polymerase beta' chain family. RpoC1 subfamily. In terms of assembly, in plastids the minimal PEP RNA polymerase catalytic core is composed of four subunits: alpha, beta, beta', and beta''. When a (nuclear-encoded) sigma factor is associated with the core the holoenzyme is formed, which can initiate transcription. Mg(2+) serves as cofactor. Requires Zn(2+) as cofactor.

The protein localises to the plastid. The protein resides in the chloroplast. It carries out the reaction RNA(n) + a ribonucleoside 5'-triphosphate = RNA(n+1) + diphosphate. Functionally, DNA-dependent RNA polymerase catalyzes the transcription of DNA into RNA using the four ribonucleoside triphosphates as substrates. In Ostreococcus tauri, this protein is DNA-directed RNA polymerase subunit beta'.